Consider the following 133-residue polypeptide: Sporulation-specific protein 2 (133 aa).

It belongs to the VPS13 family. As to quaternary structure, interacts with spo13 and spo15.

Its subcellular location is the cytoplasm. The protein resides in the cytoskeleton. It is found in the microtubule organizing center. The protein localises to the spindle pole body. Its function is as follows. Involved in sporulation. Plays a significant role in modification of the spindle pole body prior to spore formation and is required for initiating forespore membrane formation. Assists in the localization of spo13 to the outer surface of the SPB. The protein is Sporulation-specific protein 2 (spo2) of Schizosaccharomyces pombe (strain 972 / ATCC 24843) (Fission yeast).